A 437-amino-acid chain; its full sequence is MSYSFMSPPNAARFVLSNATVPAVTVVGFTGPSSEGLMKADIVVADGLIKDILPAGTAPAELAKADMRDGMVWPTFADMHTHLDKGHIWERRANPDGSFMGALDAVRSDREANWSAADVRKRMEFSLRAAYAHGTSLIRTHLDSLAPQHRISFEVFSEVREAWKDKIALQAVALFPLDFMVDDAFFADLTTVVREAGGLLGGVTQMNPDIDAQLDKLIRAAAANGLDIDLHVDETEDREVLTLKAIAAAVLRNGFTGKVTAGHCCSLARQDENVAAATIDLVAKAGISIVALPMCNMYLQDRHPGRTPRWRGVTLLHELAAAGVPTAVASDNTRDPFYAYGDLDPVEVFREAVRILHLDHPLDTAARVVTTSPASILGRPDIGRIAVGGPADLVLFSARRWSEFLSRPQSDRVVLRKGKVIDRSLPDYRELDTVIGA.

Residues His-80 and His-82 each contribute to the a divalent metal cation site. Substrate is bound at residue Lys-85. His-231 lines the a divalent metal cation pocket. The active-site Proton donor is Glu-234. Asp-331 provides a ligand contact to a divalent metal cation. 331 to 332 lines the substrate pocket; the sequence is DN.

It belongs to the metallo-dependent hydrolases superfamily. Pterin deaminase family. It depends on a divalent metal cation as a cofactor.

The catalysed reaction is a 2-amino-4-hydroxypteridine + H2O + H(+) = a 2,4-dihydroxypteridine + NH4(+). It carries out the reaction L-sepiapterin + H2O + H(+) = (S)-xanthopterin-B2 + NH4(+). Functionally, catalyzes the deamination of many pterin metabolites, such as formylpterin, pterin-6-carboxylate, pterin-7-carboxylate, pterin, hydroxymethylpterin, biopterin, D-(+)-neopterin, isoxanthopterin, sepiapterin, folate, xanthopterin, and 7,8-dihydrohydroxymethylpterin. May be involved in a degradative pathway for catabolizing pterin rings. The protein is Pterin deaminase of Rhizobium rhizogenes (strain K84 / ATCC BAA-868) (Agrobacterium radiobacter).